We begin with the raw amino-acid sequence, 940 residues long: Lon protease homolog 1, mitochondrial (940 aa).

The transit peptide at 1–61 (MLKLFTSSAS…AFFCSEPTNG (61 aa)) directs the protein to the mitochondrion. The disordered stretch occupies residues 70 to 90 (KAVESDSEVSDSKSSSAIVPT). Ser-74 carries the post-translational modification Phosphoserine. Residues 100-309 (VLALPVPHRP…LTLELMKKEM (210 aa)) form the Lon N-terminal domain. 464-471 (GPPGVGKT) contributes to the ATP binding site. A Lon proteolytic domain is found at 751–935 (QTPVGVVMGL…GKIFELAFGY (185 aa)). Residues Ser-841 and Lys-884 contribute to the active site.

It belongs to the peptidase S16 family. As to quaternary structure, homohexamer or homoheptamer. Organized in a ring with a central cavity.

Its subcellular location is the mitochondrion matrix. It catalyses the reaction Hydrolysis of proteins in presence of ATP.. In terms of biological role, ATP-dependent serine protease that mediates the selective degradation of misfolded, unassembled or oxidatively damaged polypeptides as well as certain short-lived regulatory proteins in the mitochondrial matrix. May also have a chaperone function in the assembly of inner membrane protein complexes. Participates in the regulation of mitochondrial gene expression and in the maintenance of the integrity of the mitochondrial genome. Binds to mitochondrial DNA in a site-specific manner. In Arabidopsis thaliana (Mouse-ear cress), this protein is Lon protease homolog 1, mitochondrial (LON1).